Here is a 107-residue protein sequence, read N- to C-terminus: Phosphoribosyl-ATP pyrophosphatase (107 aa).

It belongs to the PRA-PH family.

It localises to the cytoplasm. The catalysed reaction is 1-(5-phospho-beta-D-ribosyl)-ATP + H2O = 1-(5-phospho-beta-D-ribosyl)-5'-AMP + diphosphate + H(+). Its pathway is amino-acid biosynthesis; L-histidine biosynthesis; L-histidine from 5-phospho-alpha-D-ribose 1-diphosphate: step 2/9. This Clostridium tetani (strain Massachusetts / E88) protein is Phosphoribosyl-ATP pyrophosphatase (hisE).